A 423-amino-acid chain; its full sequence is MKPNFSLRLRIFNLNCWGIPYLSKHRADRMRRLGDFLNQESFDLALLEEVWSEQDFQYLRQKLSPTYPAAHHFRSGIIGSGLCVFSKHPIQELTQHIYTLNGYPYMIHHGDWFSGKAVGLLVLHLSGMVLNAYVTHLHAEYNRQKDIYLAHRVAQAWELAQFIHHTSKKADVVLLCGDLNMHPEDLGCCLLKEWTGLHDAYLETRDFKGSEEGNTMVPKNCYVSQQELKPFPFGVRIDYVLYKAVSGFYISCKSFETTTGFDPHRGTPLSDHEALMATLFVRHSPPQQNPSSTHGPAERSPLMCVLKEAWTELGLGMAQARWWATFASYVIGLGLLLLALLCVLAAGGGAGEAAILLWTPSVGLVLWAGAFYLFHVQEVNGLYRAQAELQHVLGRAREAQDLGPEPQPALLLGQQEGDRTKEQ.

Residue Glu49 participates in Mg(2+) binding. The active-site Proton acceptor is His272. Transmembrane regions (helical) follow at residues Val330–Ala350 and Ala354–Phe374. Positions Gln400–Gln423 are disordered.

It belongs to the neutral sphingomyelinase family. Mg(2+) is required as a cofactor.

It is found in the cell membrane. It carries out the reaction a sphingomyelin + H2O = phosphocholine + an N-acylsphing-4-enine + H(+). The catalysed reaction is an N-(acyl)-sphingosylphosphocholine + H2O = an N-acyl-sphingoid base + phosphocholine + H(+). It catalyses the reaction 1-O-octadecyl-sn-glycero-3-phosphocholine + H2O = 1-O-octadecyl-sn-glycerol + phosphocholine + H(+). The enzyme catalyses 1-O-hexadecyl-sn-glycero-3-phosphocholine + H2O = 1-O-hexadecyl-sn-glycerol + phosphocholine + H(+). It carries out the reaction 1-hexadecanoyl-sn-glycero-3-phosphocholine + H2O = 1-hexadecanoyl-sn-glycerol + phosphocholine + H(+). The catalysed reaction is a sphingosylphosphocholine + H2O = a sphingoid base + phosphocholine + H(+). Its pathway is lipid metabolism; sphingolipid metabolism. Catalyzes, at least in vitro, the hydrolysis of sphingomyelin to form ceramide and phosphocholine. Also hydrolyzes 1-O-alkyl-2-lyso-sn-glycero-3-phosphocholine (lyso-platelet-activating factor) in vivo. Also acts on 1-acyl-2-lyso-sn-glycero-3-phosphocholine (lyso-PC) and sphingosylphosphocholine. This is Sphingomyelin phosphodiesterase 2 from Homo sapiens (Human).